Here is a 486-residue protein sequence, read N- to C-terminus: NADH-quinone oxidoreductase subunit N (486 aa).

Transmembrane regions (helical) follow at residues 8 to 28, 36 to 56, 74 to 94, 104 to 124, 125 to 145, 160 to 180, 204 to 224, 239 to 259, 270 to 290, 298 to 318, 329 to 349, 374 to 394, 407 to 427, and 459 to 479; these read LIAL…ILSI, FIAF…YFLI, ILYI…AYPW, EFYL…ISNH, MASL…LIAY, LVLS…IYAI, VLFG…MVPF, VLSF…LYFF, IFLI…LMAI, FFGY…LVSK, GIFL…INLF, ASIV…LGFF, HLWT…YGYL, and ILIF…NPLI.

Belongs to the complex I subunit 2 family. NDH-1 is composed of 13 different subunits. Subunits NuoA, H, J, K, L, M, N constitute the membrane sector of the complex.

Its subcellular location is the cell membrane. It catalyses the reaction a quinone + NADH + 5 H(+)(in) = a quinol + NAD(+) + 4 H(+)(out). NDH-1 shuttles electrons from NADH, via FMN and iron-sulfur (Fe-S) centers, to quinones in the respiratory chain. The immediate electron acceptor for the enzyme in this species is believed to be ubiquinone. Couples the redox reaction to proton translocation (for every two electrons transferred, four hydrogen ions are translocated across the cytoplasmic membrane), and thus conserves the redox energy in a proton gradient. The chain is NADH-quinone oxidoreductase subunit N from Buchnera aphidicola subsp. Schizaphis graminum (strain Sg).